The following is a 59-amino-acid chain: Large ribosomal subunit protein bL32 (59 aa).

Residues 1–16 (MAVPKRKTSPSKRGMR) are compositionally biased toward basic residues. The segment at 1–59 (MAVPKRKTSPSKRGMRRSADALKAPTYIEDKNSGELRRPHHIDLKTGMYRGRSVLPPKD) is disordered. The span at 28 to 44 (IEDKNSGELRRPHHIDL) shows a compositional bias: basic and acidic residues.

The protein belongs to the bacterial ribosomal protein bL32 family.

The chain is Large ribosomal subunit protein bL32 from Bartonella quintana (strain Toulouse) (Rochalimaea quintana).